Here is an 880-residue protein sequence, read N- to C-terminus: Valine--tRNA ligase (880 aa).

Positions 49 to 59 match the 'HIGH' region motif; that stretch reads PNVTGKLHLGH. The short motif at 525–529 is the 'KMSKS' region element; that stretch reads KMSKS. Lys-528 serves as a coordination point for ATP. Residues 809–879 adopt a coiled-coil conformation; sequence LAGLLDLEEE…AVRARIKELK (71 aa).

This sequence belongs to the class-I aminoacyl-tRNA synthetase family. ValS type 1 subfamily. As to quaternary structure, monomer.

It is found in the cytoplasm. The catalysed reaction is tRNA(Val) + L-valine + ATP = L-valyl-tRNA(Val) + AMP + diphosphate. Functionally, catalyzes the attachment of valine to tRNA(Val). As ValRS can inadvertently accommodate and process structurally similar amino acids such as threonine, to avoid such errors, it has a 'posttransfer' editing activity that hydrolyzes mischarged Thr-tRNA(Val) in a tRNA-dependent manner. In Halalkalibacterium halodurans (strain ATCC BAA-125 / DSM 18197 / FERM 7344 / JCM 9153 / C-125) (Bacillus halodurans), this protein is Valine--tRNA ligase.